A 197-amino-acid chain; its full sequence is MYB-like transcription factor EOBII (197 aa).

HTH myb-type domains lie at 10–62 (DAEV…LNYL) and 63–117 (RPDV…QKHI). DNA-binding regions (H-T-H motif) lie at residues 38–62 (WNSLAKSAGLKRTGKSCRLRWLNYL) and 90–113 (WSKIAKHLPGRTDNEIKNYWRTRI). Residues 125–158 (GQAASSEQNDHQEACTSQMSNGPNDNTIDQTYSP) are disordered. A compositionally biased stretch (polar residues) spans 138–158 (ACTSQMSNGPNDNTIDQTYSP).

As to expression, specifically expressed in flowers, mostly in stigmas, petal tubes and petal limbs, and, to a lower extent, in anthers and stamen. Also present at low levels in roots, stems, leaves and sepals.

The protein localises to the nucleus. In terms of biological role, MYB-type transcription factor controlling the production of volatile organic compounds (VOCs), including floral volatile benzenoids and phenylpropanoids (FVBP), in flowers of fragrant cultivars (e.g. cv. Mitchell and cv. V26) by regulating the expression of ODO1 and EOBI, key regulators of the shikimate pathway, and of several biosynthetic floral scent-related genes including IGS, PAL2 and CFAT. This scent, mostly produced in the evening and night by the petals, attracts the pollinators (e.g. the night-active hawkmoth pollinator Manduca sexta). Binds to and activates the ODO1 and EOBI promoters via MYB binding sites (MBS) 5'-AAACCTAAT-3' and 5'-CTAACT-3'. Regulates the promoters of IGS1, CFAT and PAL2. Controls flowers petal opening by modulating a global transcriptomic switch. This is MYB-like transcription factor EOBII from Petunia hybrida (Petunia).